The following is a 549-amino-acid chain: Dihydroxy-acid dehydratase (549 aa).

Mg(2+) is bound at residue aspartate 78. Cysteine 119 provides a ligand contact to [2Fe-2S] cluster. Residues aspartate 120 and lysine 121 each coordinate Mg(2+). N6-carboxylysine is present on lysine 121. Residue cysteine 191 participates in [2Fe-2S] cluster binding. Residue glutamate 441 coordinates Mg(2+). Serine 466 functions as the Proton acceptor in the catalytic mechanism.

It belongs to the IlvD/Edd family. In terms of assembly, homodimer. [2Fe-2S] cluster serves as cofactor. Mg(2+) is required as a cofactor.

The enzyme catalyses (2R)-2,3-dihydroxy-3-methylbutanoate = 3-methyl-2-oxobutanoate + H2O. It carries out the reaction (2R,3R)-2,3-dihydroxy-3-methylpentanoate = (S)-3-methyl-2-oxopentanoate + H2O. It functions in the pathway amino-acid biosynthesis; L-isoleucine biosynthesis; L-isoleucine from 2-oxobutanoate: step 3/4. Its pathway is amino-acid biosynthesis; L-valine biosynthesis; L-valine from pyruvate: step 3/4. Functionally, functions in the biosynthesis of branched-chain amino acids. Catalyzes the dehydration of (2R,3R)-2,3-dihydroxy-3-methylpentanoate (2,3-dihydroxy-3-methylvalerate) into 2-oxo-3-methylpentanoate (2-oxo-3-methylvalerate) and of (2R)-2,3-dihydroxy-3-methylbutanoate (2,3-dihydroxyisovalerate) into 2-oxo-3-methylbutanoate (2-oxoisovalerate), the penultimate precursor to L-isoleucine and L-valine, respectively. The protein is Dihydroxy-acid dehydratase of Methanothermobacter thermautotrophicus (strain ATCC 29096 / DSM 1053 / JCM 10044 / NBRC 100330 / Delta H) (Methanobacterium thermoautotrophicum).